Here is an 819-residue protein sequence, read N- to C-terminus: Advillin (819 aa).

The core stretch occupies residues 1–731 (MSLSSAFRAV…YEQLKNELGD (731 aa)). One copy of the Gelsolin-like 1 repeat lies at 24-73 (MELALVPLSAHGNFYEGDCYIVLSTRRVGSLLSQNIHFWIGKDSSQDEQS). Tyrosine 85 carries the phosphotyrosine modification. A 1,2-diacyl-sn-glycero-3-phospho-(1D-myo-inositol-4,5-bisphosphate)-binding positions include 109 to 116 (KQGIIYKK) and 135 to 143 (RLLHVKGKR). 5 Gelsolin-like repeats span residues 145-185 (IQAT…GERL), 262-306 (LSVT…VEKQ), 403-454 (ENLE…DELA), 525-565 (TKAV…DERA), and 628-669 (FLVT…TEKK). Residues 628–819 (FLVTEVTDFT…LQLKKERGLF (192 aa)) are required for interaction with F-actin. Positions 732–819 (ATAIVRITAD…LQLKKERGLF (88 aa)) are headpiece. A phosphotyrosine mark is found at tyrosine 748 and tyrosine 758. Positions 753 to 819 (DGEPKYYPVE…LQLKKERGLF (67 aa)) constitute an HP domain.

This sequence belongs to the villin/gelsolin family. In terms of assembly, associates (via C-terminus) with actin. Interacts with F-actin. Interacts with SCARF1; the interaction occurs in embryonic dorsal root ganglions at 18 dpc and induces neurite-like outgrowth. Interacts with PLCE1. Interacts with ACTR2 and ACTR3; associates with the ARP2/3 complex. In terms of tissue distribution, most highly expressed in the endometrium of the uterus, the intestinal villi and the testes. Weaker expression also detected in the brain, dorsal root ganglions and on the surface of the tongue.

The protein localises to the cytoplasm. It is found in the cytoskeleton. Its subcellular location is the cell projection. It localises to the lamellipodium. The protein resides in the cell junction. The protein localises to the focal adhesion. It is found in the neuron projection. Its subcellular location is the axon. Ca(2+)-regulated actin-binding protein which plays an important role in actin bundling. May have a unique function in the morphogenesis of neuronal cells which form ganglia. Required for SREC1-mediated regulation of neurite-like outgrowth. Plays a role in regenerative sensory axon outgrowth and remodeling processes after peripheral injury in neonates. Involved in the formation of long fine actin-containing filopodia-like structures in fibroblast. Plays a role in ciliogenesis. In podocytes, controls lamellipodia formation through the regulation of EGF-induced diacylglycerol generation by PLCE1 and ARP2/3 complex assembly. The polypeptide is Advillin (Mus musculus (Mouse)).